A 291-amino-acid polypeptide reads, in one-letter code: m-AAA protease-interacting protein 1, mitochondrial (291 aa).

The N-terminal 96 residues, 1-96 (MALAARLLPQ…SFPACPQRSY (96 aa)), are a transit peptide targeting the mitochondrion.

Interacts with AFG3L2. Interacts with SPG7. Interacts with SMDT1/EMRE (via the N-terminal transit peptide); interaction is direct and takes place before maturation of SMDT1/EMRE.

The protein localises to the mitochondrion matrix. In terms of biological role, promotes sorting of SMDT1/EMRE in mitochondria by ensuring its maturation. Interacts with the transit peptide region of SMDT1/EMRE precursor protein in the mitochondrial matrix, leading to protect it against protein degradation by YME1L1, thereby ensuring SMDT1/EMRE maturation by the mitochondrial processing peptidase (PMPCA and PMPCB). This chain is m-AAA protease-interacting protein 1, mitochondrial, found in Homo sapiens (Human).